The following is a 296-amino-acid chain: Cytidine deaminase (296 aa).

2 consecutive CMP/dCMP-type deaminase domains span residues 47–167 (ELNE…FGPS) and 186–296 (DSND…VEPE). 88–90 (NIE) provides a ligand contact to substrate. H101 provides a ligand contact to Zn(2+). Residue E103 is the Proton donor of the active site. Residues C128 and C131 each contribute to the Zn(2+) site.

Belongs to the cytidine and deoxycytidylate deaminase family. Homodimer. Requires Zn(2+) as cofactor.

It carries out the reaction cytidine + H2O + H(+) = uridine + NH4(+). It catalyses the reaction 2'-deoxycytidine + H2O + H(+) = 2'-deoxyuridine + NH4(+). Its function is as follows. This enzyme scavenges exogenous and endogenous cytidine and 2'-deoxycytidine for UMP synthesis. This is Cytidine deaminase from Shewanella pealeana (strain ATCC 700345 / ANG-SQ1).